A 368-amino-acid polypeptide reads, in one-letter code: Large ribosomal subunit protein bL27m (368 aa).

The transit peptide at 1–20 directs the protein to the mitochondrion; sequence MFSGLHTSKYACQVVVQIRT. The tract at residues 23–44 is disordered; that stretch reads KRAAGSRTSMKDSAGRRLGPKK. Residues 31–44 show a composition bias toward basic and acidic residues; sequence SMKDSAGRRLGPKK.

The protein belongs to the bacterial ribosomal protein bL27 family.

It is found in the mitochondrion. In terms of biological role, component of the large subunit of mitochondrial ribosome. This is Large ribosomal subunit protein bL27m (MRPL2) from Candida glabrata (strain ATCC 2001 / BCRC 20586 / JCM 3761 / NBRC 0622 / NRRL Y-65 / CBS 138) (Yeast).